A 195-amino-acid polypeptide reads, in one-letter code: Peptide methionine sulfoxide reductase MsrA 2 (195 aa).

Residue C18 is part of the active site.

It belongs to the MsrA Met sulfoxide reductase family.

The enzyme catalyses L-methionyl-[protein] + [thioredoxin]-disulfide + H2O = L-methionyl-(S)-S-oxide-[protein] + [thioredoxin]-dithiol. It catalyses the reaction [thioredoxin]-disulfide + L-methionine + H2O = L-methionine (S)-S-oxide + [thioredoxin]-dithiol. In terms of biological role, has an important function as a repair enzyme for proteins that have been inactivated by oxidation. Catalyzes the reversible oxidation-reduction of methionine sulfoxide in proteins to methionine. The chain is Peptide methionine sulfoxide reductase MsrA 2 (msrA2) from Mesorhizobium japonicum (strain LMG 29417 / CECT 9101 / MAFF 303099) (Mesorhizobium loti (strain MAFF 303099)).